The sequence spans 490 residues: MEKWWFNSMLYKGKLEYRCGLSKSIDRFGNPIEKTSVSEDPVRNDTDKKIHSWSESSSYSNATHFVGVRDVRNFISDDTFLVRDSNRNIYSIYFDITNQIFEIDNDPSLLSERESSFFSYRTYAYLKNGSKNDDPPCDRSMYDTKYSWNNHITSCINSYLGSQICIESSILSSSDNSSDSYISSYIYGESRNSNERGSSSIRTSRNGIDFTRRENSTDFDLTQKYRHLWVQCENCYGLNYKKLLKSKMNICDQCGYHLKMSSSDRIELSIDPGTWDPMDEDMVSLDPIEFHSEEEPYKDRIDSYQRKTGLTDAVQTGTGRLNGIPIAIGVMDFQFMGGSMGSVVGEKITRLIEYATNQFLPLILVCASGGARMQEGSLSLMQMAKISAALYDYQSHKKLFYVSILTSPTTGGVTASFGMLGDIIIAEPNAYIAFAGKRVIEQTLNKIVPEGSQAAEYLFHKGLFDPIVPRNPLKGVLSELFKLHAFFPLN.

Residues 228-490 (LWVQCENCYG…FKLHAFFPLN (263 aa)) enclose the CoA carboxyltransferase N-terminal domain. Zn(2+) contacts are provided by cysteine 232, cysteine 235, cysteine 251, and cysteine 254. Residues 232-254 (CENCYGLNYKKLLKSKMNICDQC) form a C4-type zinc finger.

It belongs to the AccD/PCCB family. In terms of assembly, acetyl-CoA carboxylase is a heterohexamer composed of biotin carboxyl carrier protein, biotin carboxylase and 2 subunits each of ACCase subunit alpha and ACCase plastid-coded subunit beta (accD). It depends on Zn(2+) as a cofactor.

It is found in the plastid. The protein resides in the chloroplast stroma. It carries out the reaction N(6)-carboxybiotinyl-L-lysyl-[protein] + acetyl-CoA = N(6)-biotinyl-L-lysyl-[protein] + malonyl-CoA. It functions in the pathway lipid metabolism; malonyl-CoA biosynthesis; malonyl-CoA from acetyl-CoA: step 1/1. In terms of biological role, component of the acetyl coenzyme A carboxylase (ACC) complex. Biotin carboxylase (BC) catalyzes the carboxylation of biotin on its carrier protein (BCCP) and then the CO(2) group is transferred by the transcarboxylase to acetyl-CoA to form malonyl-CoA. The chain is Acetyl-coenzyme A carboxylase carboxyl transferase subunit beta, chloroplastic from Eucalyptus globulus subsp. globulus (Tasmanian blue gum).